We begin with the raw amino-acid sequence, 388 residues long: S-adenosylmethionine synthase (388 aa).

ATP is bound at residue His-16. Asp-18 provides a ligand contact to Mg(2+). Residue Glu-44 coordinates K(+). L-methionine is bound by residues Glu-57 and Gln-100. Residues 100–110 (QSPDIAQGVDK) are flexible loop. Residues 167–169 (DAK), 233–234 (RF), Asp-242, 248–249 (RK), Ala-265, and Lys-269 each bind ATP. Asp-242 provides a ligand contact to L-methionine. Lys-273 provides a ligand contact to L-methionine.

This sequence belongs to the AdoMet synthase family. In terms of assembly, homotetramer; dimer of dimers. Mg(2+) serves as cofactor. It depends on K(+) as a cofactor.

Its subcellular location is the cytoplasm. The enzyme catalyses L-methionine + ATP + H2O = S-adenosyl-L-methionine + phosphate + diphosphate. The protein operates within amino-acid biosynthesis; S-adenosyl-L-methionine biosynthesis; S-adenosyl-L-methionine from L-methionine: step 1/1. In terms of biological role, catalyzes the formation of S-adenosylmethionine (AdoMet) from methionine and ATP. The overall synthetic reaction is composed of two sequential steps, AdoMet formation and the subsequent tripolyphosphate hydrolysis which occurs prior to release of AdoMet from the enzyme. The protein is S-adenosylmethionine synthase of Polynucleobacter necessarius subsp. necessarius (strain STIR1).